A 349-amino-acid polypeptide reads, in one-letter code: Protein-glutamate methylesterase/protein-glutamine glutaminase 2 (349 aa).

A Response regulatory domain is found at 4–121; the sequence is SVLVVDDSAL…AEGMQAYAEE (118 aa). At Asp55 the chain carries 4-aspartylphosphate. Residues 151-343 form the CheB-type methylesterase domain; sequence LLSTEKIIAL…AALLQQAARR (193 aa). Active-site residues include Ser163, His189, and Asp285.

This sequence belongs to the CheB family. As to quaternary structure, interacts with the C-terminal pentapeptide GWEEF of McpB. Phosphorylated by CheA. Phosphorylation of the N-terminal regulatory domain activates the methylesterase activity.

It is found in the cytoplasm. The enzyme catalyses [protein]-L-glutamate 5-O-methyl ester + H2O = L-glutamyl-[protein] + methanol + H(+). It carries out the reaction L-glutaminyl-[protein] + H2O = L-glutamyl-[protein] + NH4(+). Involved in chemotaxis. Part of a chemotaxis signal transduction system that modulates chemotaxis in response to various stimuli. Catalyzes the demethylation of specific methylglutamate residues introduced into the chemoreceptors (methyl-accepting chemotaxis proteins or MCP) by CheR. Also mediates the irreversible deamidation of specific glutamine residues to glutamic acid. Acts on the methyl-accepting chemotaxis protein McpB. May be involved in a specific chemotactic response, which takes place during infection and is required for P.aeruginosa pathogenicity. The polypeptide is Protein-glutamate methylesterase/protein-glutamine glutaminase 2 (Pseudomonas aeruginosa (strain ATCC 15692 / DSM 22644 / CIP 104116 / JCM 14847 / LMG 12228 / 1C / PRS 101 / PAO1)).